A 186-amino-acid polypeptide reads, in one-letter code: Photosystem I assembly protein Ycf4 (186 aa).

2 helical membrane-spanning segments follow: residues 26–46 (WATIIFIGALGFLLAGLSSYF) and 66–86 (IVMTFYGSIGVFLSLFLWLTI).

It belongs to the Ycf4 family.

The protein localises to the plastid. It is found in the chloroplast thylakoid membrane. In terms of biological role, seems to be required for the assembly of the photosystem I complex. This chain is Photosystem I assembly protein Ycf4, found in Pyropia yezoensis (Susabi-nori).